Reading from the N-terminus, the 131-residue chain is Ribosome-binding factor A (131 aa).

This sequence belongs to the RbfA family. In terms of assembly, monomer. Binds 30S ribosomal subunits, but not 50S ribosomal subunits or 70S ribosomes.

The protein localises to the cytoplasm. One of several proteins that assist in the late maturation steps of the functional core of the 30S ribosomal subunit. Associates with free 30S ribosomal subunits (but not with 30S subunits that are part of 70S ribosomes or polysomes). Required for efficient processing of 16S rRNA. May interact with the 5'-terminal helix region of 16S rRNA. This chain is Ribosome-binding factor A, found in Chromohalobacter salexigens (strain ATCC BAA-138 / DSM 3043 / CIP 106854 / NCIMB 13768 / 1H11).